Here is a 45-residue protein sequence, read N- to C-terminus: Host translation inhibitor E66L (45 aa).

The protein belongs to the asfivirus E66L family.

It is found in the host endoplasmic reticulum. In terms of biological role, inhibits host protein translation, probably through the EIF2AK2/EIF2S1 signaling pathway. Promotes cell retention in the G0/G1 phase. This is Host translation inhibitor E66L from Ornithodoros (relapsing fever ticks).